Here is a 531-residue protein sequence, read N- to C-terminus: Zinc finger protein 692 (531 aa).

Positions 155–178 are enriched in basic and acidic residues; the sequence is EAQGLECEQRERTQETRLSRRVDS. Disordered regions lie at residues 155 to 249 and 287 to 307; these read EAQG…PATL and MTES…PTWD. The span at 186–206 shows a compositional bias: acidic residues; that stretch reads LGEDQDVEEEEEEEEEEEELL. Serine 231 is modified (phosphoserine). The span at 290-303 shows a compositional bias: polar residues; that stretch reads SLESPGSQAQSAPN. 5 C2H2-type zinc fingers span residues 327 to 352, 358 to 382, 388 to 410, 416 to 438, and 447 to 470; these read MPCD…KYQH, FCCP…VKLH, YICE…RRIH, LQCE…RRKH, and FPCE…SKSH. Serine 469 is subject to Phosphoserine. Residues 474–531 form a disordered region; it reads LPAQEPPGSLVSSPSISAPESLQSPEGASISTTSDSNPASSTSISSPGVPDPRNREKS. The span at 483-499 shows a compositional bias: polar residues; that stretch reads LVSSPSISAPESLQSPE. Residues 502–520 show a composition bias toward low complexity; it reads SISTTSDSNPASSTSISSP.

It belongs to the krueppel C2H2-type zinc-finger protein family. In terms of processing, phosphorylation at Ser-469 results in loss of DNA-binding activity.

It localises to the nucleus. May act as an transcriptional repressor for PCK1 gene expression, in turn may participate in the hepatic gluconeogenesis regulation through the activated AMPK signaling pathway. The polypeptide is Zinc finger protein 692 (Mus musculus (Mouse)).